A 290-amino-acid chain; its full sequence is TIP41-like protein (290 aa).

Belongs to the TIP41 family. As to quaternary structure, interacts with TAP46. In terms of tissue distribution, widely expressed.

May be involved in the regulation of the TOR signaling pathway. Indirectly activates the PP2A phosphatase via interaction with its suppressor TAP46. Could play a role in cytoskeleton functions. The chain is TIP41-like protein from Arabidopsis thaliana (Mouse-ear cress).